The following is a 207-amino-acid chain: Phosphoenolpyruvate guanylyltransferase (207 aa).

Phosphoenolpyruvate-binding residues include T137, G153, and S156.

Belongs to the CofC family.

The catalysed reaction is phosphoenolpyruvate + GTP + H(+) = enolpyruvoyl-2-diphospho-5'-guanosine + diphosphate. The protein operates within cofactor biosynthesis; coenzyme F420 biosynthesis. Its function is as follows. Guanylyltransferase that catalyzes the activation of phosphoenolpyruvate (PEP) as enolpyruvoyl-2-diphospho-5'-guanosine, via the condensation of PEP with GTP. It is involved in the biosynthesis of coenzyme F420, a hydride carrier cofactor. In Sphaerobacter thermophilus (strain ATCC 49802 / DSM 20745 / KCCM 41009 / NCIMB 13125 / S 6022), this protein is Phosphoenolpyruvate guanylyltransferase.